Reading from the N-terminus, the 1025-residue chain is Exportin-T (1025 aa).

Belongs to the exportin family.

The protein resides in the nucleus. Its subcellular location is the cytoplasm. Its function is as follows. tRNA nucleus export receptor which facilitates tRNA translocation across the nuclear pore complex. Involved in pre-tRNA splicing, probably by affecting the interaction of pre-tRNA with splicing endonuclease. The protein is Exportin-T (LOS1) of Candida albicans (strain SC5314 / ATCC MYA-2876) (Yeast).